The following is a 367-amino-acid chain: Leucine-rich repeat-containing protein 28 (367 aa).

LRR repeat units lie at residues lysine 16 to lysine 36, tyrosine 42 to lysine 63, asparagine 66 to leucine 87, lysine 89 to lysine 111, serine 112 to leucine 133, glutamate 135 to cysteine 156, serine 158 to leucine 179, serine 181 to serine 202, and glutamate 204 to lysine 226.

This is Leucine-rich repeat-containing protein 28 (lrrc28) from Xenopus tropicalis (Western clawed frog).